Here is a 285-residue protein sequence, read N- to C-terminus: Bark agglutinin I polypeptide A (285 aa).

Positions 1-31 (MTSYNFKTQTSFPLLLSISFFFLLLLNKVNS) are cleaved as a signal peptide. The N-linked (GlcNAc...) asparagine glycan is linked to Asn147. Mn(2+) contacts are provided by Glu156 and Asp158. Asp158, Phe160, Asn162, and Asp166 together coordinate Ca(2+). Residues Asp166 and His171 each contribute to the Mn(2+) site. Asn188 is a glycosylation site (N-linked (GlcNAc...) asparagine).

Belongs to the leguminous lectin family. In terms of assembly, RPbAI is composed of two polypeptides, A and B, that associate into five different tetrameric isolectins. The A4 combination is the only one devoid of agglutination activity. Isoform B4 displays maximal agglutination activity. In terms of tissue distribution, strong expression in seed. Lower levels in the flower, and the bark of the roots. No expression in leaf. The lectin accumulates in the inner bark in autumn.

N-acetyl-D-galactosamine specific lectin. Bark lectins are storage protein that probably maintains stocks of nitrogen during dormant period. Self-aggregatable molecules that can bind their own carbohydrate side chains. They could also play a role in the plant's defense against phytophagous invertebrates or herbivorous higher animals. This Robinia pseudoacacia (Black locust) protein is Bark agglutinin I polypeptide A.